Reading from the N-terminus, the 264-residue chain is Thymidylate synthase (264 aa).

DUMP is bound by residues Arg-21 and 126–127 (RR). Cys-146 serves as the catalytic Nucleophile. Residues 166–169 (RSAD), Asn-177, and 207–209 (HLY) each bind dUMP. Asp-169 lines the (6R)-5,10-methylene-5,6,7,8-tetrahydrofolate pocket. Residue Ala-263 participates in (6R)-5,10-methylene-5,6,7,8-tetrahydrofolate binding.

It belongs to the thymidylate synthase family. Bacterial-type ThyA subfamily. In terms of assembly, homodimer.

It localises to the cytoplasm. It carries out the reaction dUMP + (6R)-5,10-methylene-5,6,7,8-tetrahydrofolate = 7,8-dihydrofolate + dTMP. The protein operates within pyrimidine metabolism; dTTP biosynthesis. Its function is as follows. Catalyzes the reductive methylation of 2'-deoxyuridine-5'-monophosphate (dUMP) to 2'-deoxythymidine-5'-monophosphate (dTMP) while utilizing 5,10-methylenetetrahydrofolate (mTHF) as the methyl donor and reductant in the reaction, yielding dihydrofolate (DHF) as a by-product. This enzymatic reaction provides an intracellular de novo source of dTMP, an essential precursor for DNA biosynthesis. This Rhodopseudomonas palustris (strain ATCC BAA-98 / CGA009) protein is Thymidylate synthase.